The chain runs to 368 residues: NAD(P)H-quinone oxidoreductase subunit 1, chloroplastic (368 aa).

The next 9 membrane-spanning stretches (helical) occupy residues 11–31 (RVIN…LIWI), 33–53 (IYIL…VWLE), 98–118 (WLFS…YLVI), 131–151 (IGVF…LMAG), 177–197 (LALC…VDIV), 205–225 (FWGW…ISSL), 255–275 (FGLF…FVTI), 305–325 (VLGI…FLFI), and 348–368 (FLLP…LLLL).

This sequence belongs to the complex I subunit 1 family. As to quaternary structure, NDH is composed of at least 16 different subunits, 5 of which are encoded in the nucleus.

The protein localises to the plastid. Its subcellular location is the chloroplast thylakoid membrane. It catalyses the reaction a plastoquinone + NADH + (n+1) H(+)(in) = a plastoquinol + NAD(+) + n H(+)(out). It carries out the reaction a plastoquinone + NADPH + (n+1) H(+)(in) = a plastoquinol + NADP(+) + n H(+)(out). Its function is as follows. NDH shuttles electrons from NAD(P)H:plastoquinone, via FMN and iron-sulfur (Fe-S) centers, to quinones in the photosynthetic chain and possibly in a chloroplast respiratory chain. The immediate electron acceptor for the enzyme in this species is believed to be plastoquinone. Couples the redox reaction to proton translocation, and thus conserves the redox energy in a proton gradient. The chain is NAD(P)H-quinone oxidoreductase subunit 1, chloroplastic from Cycas taitungensis (Prince sago).